The primary structure comprises 506 residues: Alpha-1,3/1,6-mannosyltransferase alg2 (506 aa).

The next 2 helical transmembrane spans lie at 82 to 104 (SIFG…MILL) and 118 to 138 (LSTC…YCHF). Asn299 carries N-linked (GlcNAc...) asparagine glycosylation. A run of 2 helical transmembrane segments spans residues 443–463 (LLAV…AATV) and 481–501 (LGFM…TVYA).

This sequence belongs to the glycosyltransferase group 1 family. Glycosyltransferase 4 subfamily.

The protein localises to the endoplasmic reticulum membrane. The catalysed reaction is a beta-D-Man-(1-&gt;4)-beta-D-GlcNAc-(1-&gt;4)-alpha-D-GlcNAc-diphospho-di-trans,poly-cis-dolichol + GDP-alpha-D-mannose = an alpha-D-Man-(1-&gt;3)-beta-D-Man-(1-&gt;4)-beta-D-GlcNAc-(1-&gt;4)-alpha-D-GlcNAc-diphospho-di-trans,poly-cis-dolichol + GDP + H(+). The enzyme catalyses an alpha-D-Man-(1-&gt;3)-beta-D-Man-(1-&gt;4)-beta-D-GlcNAc-(1-&gt;4)-alpha-D-GlcNAc-diphospho-di-trans,poly-cis-dolichol + GDP-alpha-D-mannose = an alpha-D-Man-(1-&gt;3)-[alpha-D-Man-(1-&gt;6)]-beta-D-Man-(1-&gt;4)-beta-D-GlcNAc-(1-&gt;4)-alpha-D-GlcNAc-diphospho-di-trans,poly-cis-dolichol + GDP + H(+). Its pathway is protein modification; protein glycosylation. Mannosylates Man(2)GlcNAc(2)-dolichol diphosphate and Man(1)GlcNAc(2)-dolichol diphosphate to form Man(3)GlcNAc(2)-dolichol diphosphate. In Schizosaccharomyces pombe (strain 972 / ATCC 24843) (Fission yeast), this protein is Alpha-1,3/1,6-mannosyltransferase alg2 (alg2).